The sequence spans 895 residues: Probable methyltransferase PMT27 (895 aa).

At 1-16 (MAFGRGRGNKRTSTSS) the chain is on the cytoplasmic side. Residues 17-37 (YASTITMVIFVALCVFGVWML) form a helical; Signal-anchor for type II membrane protein membrane-spanning segment. At 38–895 (SSNSVIPPQI…KGFWRPETSQ (858 aa)) the chain is on the lumenal side. Residues 43–52 (IPPQITQGST) show a composition bias toward polar residues. Positions 43–362 (IPPQITQGST…QRQTSESNTV (320 aa)) are disordered. Basic and acidic residues predominate over residues 90–114 (NPGKLPDDAVKSEDEQRKSAKEKSE). Residues 115-127 (TTSSKTQTQETQQ) are compositionally biased toward low complexity. Basic and acidic residues predominate over residues 129 to 143 (NDDKISEEKEKDNGK). Asn-145 carries N-linked (GlcNAc...) asparagine glycosylation. Over residues 154-174 (GQMKKVVKEFEKEQKQQRDED) the composition is skewed to basic and acidic residues. Residues 176–191 (GTQPKGTQGQEQGQGK) are compositionally biased toward low complexity. Composition is skewed to polar residues over residues 199-232 (GNKQ…GETS) and 243-256 (PEEQ…TGQQ). Positions 257-320 (NEEKTTASEE…RKDEKKHEQG (64 aa)) are enriched in basic and acidic residues. The span at 337–346 (SQKSWKSQAT) shows a compositional bias: polar residues. N-linked (GlcNAc...) asparagine glycosylation is found at Asn-375 and Asn-709.

The protein belongs to the methyltransferase superfamily.

Its subcellular location is the endoplasmic reticulum membrane. The sequence is that of Probable methyltransferase PMT27 from Arabidopsis thaliana (Mouse-ear cress).